We begin with the raw amino-acid sequence, 56 residues long: Small integral membrane protein 39 (56 aa).

The chain crosses the membrane as a helical span at residues 33–53; the sequence is VVVSAVLALLVLINVVLIFLL.

It localises to the membrane. This is Small integral membrane protein 39 from Homo sapiens (Human).